Reading from the N-terminus, the 535-residue chain is Bifunctional purine biosynthesis protein PurH (535 aa).

An MGS-like domain is found at 6–151 (TRLPVRRALI…KNHKDVAIVV (146 aa)).

The protein belongs to the PurH family.

The catalysed reaction is (6R)-10-formyltetrahydrofolate + 5-amino-1-(5-phospho-beta-D-ribosyl)imidazole-4-carboxamide = 5-formamido-1-(5-phospho-D-ribosyl)imidazole-4-carboxamide + (6S)-5,6,7,8-tetrahydrofolate. It catalyses the reaction IMP + H2O = 5-formamido-1-(5-phospho-D-ribosyl)imidazole-4-carboxamide. Its pathway is purine metabolism; IMP biosynthesis via de novo pathway; 5-formamido-1-(5-phospho-D-ribosyl)imidazole-4-carboxamide from 5-amino-1-(5-phospho-D-ribosyl)imidazole-4-carboxamide (10-formyl THF route): step 1/1. It participates in purine metabolism; IMP biosynthesis via de novo pathway; IMP from 5-formamido-1-(5-phospho-D-ribosyl)imidazole-4-carboxamide: step 1/1. In Ectopseudomonas mendocina (strain ymp) (Pseudomonas mendocina), this protein is Bifunctional purine biosynthesis protein PurH.